Here is an 877-residue protein sequence, read N- to C-terminus: Dynamin (877 aa).

The Dynamin-type G domain occupies 23–289 (QLDLPQIAVV…LTNHIRDTLP (267 aa)). The tract at residues 33–40 (GGQSAGKS) is G1 motif. Residue 33 to 41 (GGQSAGKSS) participates in GTP binding. Residues 59–61 (VTR) form a G2 motif region. A G3 motif region spans residues 131–134 (DLPG). Residues 200–203 (TKLD) form a G4 motif region. GTP is bound by residues 200–206 (TKLDLMD) and 231–234 (NRSQ). The interval 230–233 (VNRS) is G5 motif. The PH domain occupies 513 to 621 (QVIRKGHMVI…WKASFLRAGV (109 aa)). 2 disordered regions span residues 623 to 648 (PEKQ…QLER) and 740 to 834 (TVSS…SGAV). A compositionally biased stretch (acidic residues) spans 630 to 641 (ENGDESASEESS). Residues 650 to 741 (VETIRNLVDS…IIGDVSMATV (92 aa)) form the GED domain. Phosphoserine is present on residues serine 756, serine 764, and serine 767. The span at 788 to 826 (PPLPPSTGRPAPAIPNRPGGGAPPLPGGRPGGSLPPPML) shows a compositional bias: pro residues.

It belongs to the TRAFAC class dynamin-like GTPase superfamily. Dynamin/Fzo/YdjA family.

The protein localises to the cytoplasm. The protein resides in the cytoskeleton. It carries out the reaction GTP + H2O = GDP + phosphate + H(+). Microtubule-associated force-producing protein which is involved in the production of microtubule bundles and which is able to bind and hydrolyze GTP. Implicated in endocytic protein sorting. This is Dynamin (shi) from Drosophila melanogaster (Fruit fly).